A 197-amino-acid chain; its full sequence is Prefoldin subunit 3 (197 aa).

A disordered region spans residues 1-26 (MASLALRGSSENPAPTKDTTTNPRGI). Over residues 9–23 (SSENPAPTKDTTTNP) the composition is skewed to polar residues.

Belongs to the prefoldin subunit alpha family. Heterohexamer of two PFD-alpha type and four PFD-beta type subunits.

Functionally, prefoldin subunit; part of the gene cluster that mediates the biosynthesis of elsinochromes, pigments consisting of at least four interconvertible tautomers (A, B, C and D) that have a core phenolic quinone to which various side chains are attached and which play an important role in fungal pathogenesis. The non-reducing polyketide synthase PKS1 was proposed to iteratively catalyze decarboxylation between acetyl-CoA and malonyl-CoA subunits for polyketide chain elongation. The released polyketide undergoes cyclization to form an aromatic ring, and proceeds via serial modification steps to produce the heptaketide back- bone of elsinochrome. As elsinochrome has a symmetrical structure, two identical heptaketides are fused to form a core 1,2-dihydrobenzo-perylene ring structure, which can then be successively modified to produce the various derivatives of elsinochrome. Some of these reactions may be cooperatively carried out, at least in part, by the products of RDT1, OXR1 and PKS1. PRF1, embedded within the elsinochrome cluster possibly functions to stabilize some of the biosynthetic enzymes required for elsinochrome production. As prefoldin is a hexamer containing 2 a and 4 b subunits, additional prefoldin subunits, whose coding genes may not immediately link to the elsinochrome biosynthetic gene cluster, are required to fulfill the chaperone function. In addition, no methyltransferase-coding gene exists within the biosynthetic gene cluster, even though elsinochrome has four methyl groups at positions C3, C7, C8 and C12. Apparently, the identified gene cluster does not contain the entire entourage of genes responsible for elsinochrome biosynthesis. Once elsinochrome is synthesized, it must be exported outside the fungal cells, which is probably accomplished by the ECT1 transporter, to avoid toxicity. The sequence is that of Prefoldin subunit 3 from Elsinoe fawcettii (Citrus scab fungus).